Reading from the N-terminus, the 361-residue chain is Chorismate synthase (361 aa).

NADP(+) is bound by residues R48 and R54. FMN is bound by residues 125–127 (RSS), 238–239 (NA), G278, 293–297 (KPTSS), and R319.

This sequence belongs to the chorismate synthase family. Homotetramer. FMNH2 is required as a cofactor.

The catalysed reaction is 5-O-(1-carboxyvinyl)-3-phosphoshikimate = chorismate + phosphate. Its pathway is metabolic intermediate biosynthesis; chorismate biosynthesis; chorismate from D-erythrose 4-phosphate and phosphoenolpyruvate: step 7/7. Catalyzes the anti-1,4-elimination of the C-3 phosphate and the C-6 proR hydrogen from 5-enolpyruvylshikimate-3-phosphate (EPSP) to yield chorismate, which is the branch point compound that serves as the starting substrate for the three terminal pathways of aromatic amino acid biosynthesis. This reaction introduces a second double bond into the aromatic ring system. The chain is Chorismate synthase from Shigella flexneri serotype 5b (strain 8401).